The sequence spans 434 residues: Ataxin-10 homolog (434 aa).

It belongs to the ataxin-10 family.

The protein localises to the cytoplasm. It localises to the nucleus. Functionally, may play a role in the regulation of cytokinesis. This chain is Ataxin-10 homolog (mug160), found in Schizosaccharomyces pombe (strain 972 / ATCC 24843) (Fission yeast).